The primary structure comprises 305 residues: Tyrosine recombinase XerC (305 aa).

A Core-binding (CB) domain is found at 4–95 (TQIQELIIKW…AIKNFYKFLE (92 aa)). Residues 116 to 298 (LLPKALSEEE…SIKHLETAYV (183 aa)) form the Tyr recombinase domain. Active-site residues include R159, K182, H250, R253, and H276. The active-site O-(3'-phospho-DNA)-tyrosine intermediate is the Y285.

The protein belongs to the 'phage' integrase family. XerC subfamily. Forms a cyclic heterotetrameric complex composed of two molecules of XerC and two molecules of XerD.

Its subcellular location is the cytoplasm. Its function is as follows. Site-specific tyrosine recombinase, which acts by catalyzing the cutting and rejoining of the recombining DNA molecules. The XerC-XerD complex is essential to convert dimers of the bacterial chromosome into monomers to permit their segregation at cell division. It also contributes to the segregational stability of plasmids. The protein is Tyrosine recombinase XerC of Rickettsia bellii (strain RML369-C).